A 1027-amino-acid polypeptide reads, in one-letter code: Abnormal embryogenesis protein 30 (1027 aa).

WD repeat units follow at residues 18–65 (RTPF…IQAV) and 70–109 (KLDSSVSALHFSPDGRFLAAATSKGIIHLLDVETGKVRFS). Disordered stretches follow at residues 619-655 (NDSSPFLEEDEGEPEQEEQKPDEEPEPEGEPQPACDL) and 1005-1027 (AMDSGRDLTDNGESDEDEEDDDI). Composition is skewed to acidic residues over residues 625–647 (LEEDEGEPEQEEQKPDEEPEPEG) and 1014–1027 (DNGESDEDEEDDDI).

Belongs to the APC4 family. The APC/C is probably composed of at least 12 subunits: apc-2, apc-10, apc-11, cdc-26, emb-1, emb-27, emb-30, mat-1, mat-2, mat-3, such-1 and gfi-3.

It functions in the pathway protein modification; protein ubiquitination. Functionally, probable component of the anaphase promoting complex/cyclosome (APC/C), a cell cycle-regulated E3 ubiquitin ligase that controls progression through mitosis and the G1 phase of the cell cycle. The APC/C complex acts by mediating ubiquitination and subsequent degradation of target proteins. Developmental role in early embryogenesis and the metaphase to anaphase transition in oocyte and spermatocyte meiosis and mitosis in somatic and germ cells. Required for embryonic anterior-posterior axis formation. Negatively regulates ify-1 protein levels during meiosis I. Plays a role in regulating the abundance of glr-1 receptors in postmitotic neurons, which may in turn control animal locomotion. Involved in regulating GABA neurotransmitter release at neuromuscular junctions in GABA motor neurons. The polypeptide is Abnormal embryogenesis protein 30 (Caenorhabditis elegans).